We begin with the raw amino-acid sequence, 256 residues long: Putative adhesin P1-like protein MPN_132 (256 aa).

A compositionally biased stretch (low complexity) spans 56-72 (AVSESQAATSSTTTTAT). Disordered stretches follow at residues 56-115 (AVSE…PYLH) and 149-235 (FGTD…EVVG). Positions 96-112 (KASTQGSGQTNSQNTSP) are enriched in polar residues. Composition is skewed to low complexity over residues 155–179 (TQPQPQPLKTTTPVFGTNSGNLGSV) and 211–222 (STSDGNTSSTNN).

It belongs to the adhesin P1 family.

In Mycoplasma pneumoniae (strain ATCC 29342 / M129 / Subtype 1) (Mycoplasmoides pneumoniae), this protein is Putative adhesin P1-like protein MPN_132.